A 623-amino-acid chain; its full sequence is uncharacterized protein (623 aa).

A coiled-coil region spans residues 256-351 (AEEKLLSKNK…EEIHGLKKKN (96 aa)). Disordered stretches follow at residues 417–485 (NRRN…SPSS) and 497–536 (ALSS…ECAT). A compositionally biased stretch (polar residues) spans 422–431 (LESVPFNTLS). Basic and acidic residues predominate over residues 452 to 481 (ELKKPAESYGDETKKPNQHNKDGSIDEKPK).

This is an uncharacterized protein from Arabidopsis thaliana (Mouse-ear cress).